Here is a 128-residue protein sequence, read N- to C-terminus: MRTPAQFLGILLLWFPGIKCDIKMTQSPSSMYASLGERVTISCKASQDINSYLTWFQQKPGKSPKTLLYRANRLVDGVPSRFSGSGSGQDFSLTISSLEYEDMGIYYCLQYDEFPLTFGAGTKLELKR.

A signal peptide spans 1-20 (MRTPAQFLGILLLWFPGIKC). The framework-1 stretch occupies residues 21–43 (DIKMTQSPSSMYASLGERVTISC). Cys-43 and Cys-108 are oxidised to a cystine. The complementarity-determining-1 stretch occupies residues 44 to 54 (KASQDINSYLT). The interval 55-69 (WFQQKPGKSPKTLLY) is framework-2. The tract at residues 70-76 (RANRLVD) is complementarity-determining-2. The interval 77–108 (GVPSRFSGSGSGQDFSLTISSLEYEDMGIYYC) is framework-3. Positions 109 to 117 (LQYDEFPLT) are complementarity-determining-3. Residues 118 to 127 (FGAGTKLELK) form a framework-4 region.

This is Ig kappa chain V-V region T1 from Mus musculus (Mouse).